Here is a 114-residue protein sequence, read N- to C-terminus: V-type proton ATPase subunit G (114 aa).

An N-acetylserine modification is found at serine 2.

This sequence belongs to the V-ATPase G subunit family. V-ATPase is a heteromultimeric enzyme composed of a peripheral catalytic V1 complex (components A to H) attached to an integral membrane V0 proton pore complex (components: a, c, c', c'', d, e, f and VOA1).

It is found in the vacuole membrane. Functionally, subunit of the V1 complex of vacuolar(H+)-ATPase (V-ATPase), a multisubunit enzyme composed of a peripheral complex (V1) that hydrolyzes ATP and a membrane integral complex (V0) that translocates protons. V-ATPase is responsible for acidifying and maintaining the pH of intracellular compartments. This chain is V-type proton ATPase subunit G, found in Saccharomyces cerevisiae (strain ATCC 204508 / S288c) (Baker's yeast).